We begin with the raw amino-acid sequence, 336 residues long: Glyceraldehyde-3-phosphate dehydrogenase, chromosomal (336 aa).

Residues 12–13, Asp37, Arg81, and Ser123 each bind NAD(+); that span reads RI. Residues 154–156 and Thr185 contribute to the D-glyceraldehyde 3-phosphate site; that span reads SCT. Cys155 (nucleophile) is an active-site residue. Asn186 lines the NAD(+) pocket. D-glyceraldehyde 3-phosphate is bound by residues Arg200, 213–214, and Arg236; that span reads TG. Asn317 lines the NAD(+) pocket.

This sequence belongs to the glyceraldehyde-3-phosphate dehydrogenase family. Homotetramer.

It catalyses the reaction D-glyceraldehyde 3-phosphate + phosphate + NAD(+) = (2R)-3-phospho-glyceroyl phosphate + NADH + H(+). It functions in the pathway carbohydrate biosynthesis; Calvin cycle. In terms of biological role, could be involved in carbon fixation as a component of the Calvin cycle. Catalyzes the oxidative phosphorylation of glyceraldehyde 3-phosphate (G3P) to 1,3-bisphosphoglycerate (BPG) using the cofactor NAD. The first reaction step involves the formation of a hemiacetal intermediate between G3P and a cysteine residue, and this hemiacetal intermediate is then oxidized to a thioester, with concomitant reduction of NAD to NADH. The reduced NADH is then exchanged with the second NAD, and the thioester is attacked by a nucleophilic inorganic phosphate to produce BPG. This chain is Glyceraldehyde-3-phosphate dehydrogenase, chromosomal (cbbGC), found in Cupriavidus necator (strain ATCC 17699 / DSM 428 / KCTC 22496 / NCIMB 10442 / H16 / Stanier 337) (Ralstonia eutropha).